The following is a 500-amino-acid chain: Protein nucleotidyltransferase YdiU (500 aa).

ATP is bound by residues Gly96, Gly98, Arg99, Lys119, Asp131, Gly132, Arg182, and Arg189. Asp258 acts as the Proton acceptor in catalysis. Mg(2+) is bound by residues Asn259 and Asp268. Residue Asp268 participates in ATP binding.

Belongs to the SELO family. The cofactor is Mg(2+). It depends on Mn(2+) as a cofactor.

The enzyme catalyses L-seryl-[protein] + ATP = 3-O-(5'-adenylyl)-L-seryl-[protein] + diphosphate. It catalyses the reaction L-threonyl-[protein] + ATP = 3-O-(5'-adenylyl)-L-threonyl-[protein] + diphosphate. It carries out the reaction L-tyrosyl-[protein] + ATP = O-(5'-adenylyl)-L-tyrosyl-[protein] + diphosphate. The catalysed reaction is L-histidyl-[protein] + UTP = N(tele)-(5'-uridylyl)-L-histidyl-[protein] + diphosphate. The enzyme catalyses L-seryl-[protein] + UTP = O-(5'-uridylyl)-L-seryl-[protein] + diphosphate. It catalyses the reaction L-tyrosyl-[protein] + UTP = O-(5'-uridylyl)-L-tyrosyl-[protein] + diphosphate. Functionally, nucleotidyltransferase involved in the post-translational modification of proteins. It can catalyze the addition of adenosine monophosphate (AMP) or uridine monophosphate (UMP) to a protein, resulting in modifications known as AMPylation and UMPylation. This is Protein nucleotidyltransferase YdiU from Rhizobium etli (strain CIAT 652).